Reading from the N-terminus, the 327-residue chain is Poly(ribitol-phosphate) beta-N-acetylglucosaminyltransferase TarP (327 aa).

UDP-N-acetyl-alpha-D-glucosamine-binding positions include Pro-9, Asp-41, Asn-68, Arg-76, and 92–94 (DSD). Residue Asp-94 participates in Mn(2+) binding. Asp-181 serves as the catalytic Proton acceptor.

This sequence belongs to the glycosyltransferase 2 family. In terms of assembly, homotrimer. It depends on Mn(2+) as a cofactor.

The catalysed reaction is 4-O-[(D-ribitylphospho)(n)-di{(2R)-glycerylphospho}]-N-acetyl-beta-D-mannosaminyl-(1-&gt;4)-N-acetyl-alpha-D-glucosaminyl di-trans,octa-cis-undecaprenyl diphosphate + n UDP-N-acetyl-alpha-D-glucosamine = 4-O-([3-N-acetyl-beta-D-glucosaminyl-1-D-ribitylphospho](n)-di{[2R]-1-glycerylphospho})-N-acetyl-beta-D-mannosaminyl-(1-&gt;4)-N-acetyl-alpha-D-glucosaminyl di-trans,octa-cis-undecaprenyl diphosphate + n UDP + n H(+). Its pathway is cell wall biogenesis; poly(ribitol phosphate) teichoic acid biosynthesis. Attaches beta-O-GlcNAc (beta-O-N-acetyl-D-glucosamine) residues to the C3 position of poly(RboP)-wall teichoic acids (WTAs). Attenuates immunogenicity of WTA and protects S.aureus against adaptative host defenses by allowing bacteria to evade recognition by preexisting anti-S.aureus antibodies. Also protects the cell from podophage infection. The sequence is that of Poly(ribitol-phosphate) beta-N-acetylglucosaminyltransferase TarP from Staphylococcus aureus (strain N315).